The sequence spans 416 residues: Ribulose bisphosphate carboxylase large chain (416 aa).

K5 carries the N6,N6,N6-trimethyllysine modification. The substrate site is built by N114 and T164. Residue K166 is the Proton acceptor of the active site. K168 is a binding site for substrate. Residues K192, D194, and E195 each coordinate Mg(2+). K192 carries the N6-carboxylysine modification. The active-site Proton acceptor is the H285. 3 residues coordinate substrate: R286, H318, and S370.

Belongs to the RuBisCO large chain family. Type I subfamily. As to quaternary structure, heterohexadecamer of 8 large chains and 8 small chains; disulfide-linked. The disulfide link is formed within the large subunit homodimers. The cofactor is Mg(2+). In terms of processing, the disulfide bond which can form in the large chain dimeric partners within the hexadecamer appears to be associated with oxidative stress and protein turnover.

Its subcellular location is the plastid. It localises to the chloroplast. The catalysed reaction is 2 (2R)-3-phosphoglycerate + 2 H(+) = D-ribulose 1,5-bisphosphate + CO2 + H2O. It catalyses the reaction D-ribulose 1,5-bisphosphate + O2 = 2-phosphoglycolate + (2R)-3-phosphoglycerate + 2 H(+). In terms of biological role, ruBisCO catalyzes two reactions: the carboxylation of D-ribulose 1,5-bisphosphate, the primary event in carbon dioxide fixation, as well as the oxidative fragmentation of the pentose substrate in the photorespiration process. Both reactions occur simultaneously and in competition at the same active site. This Spigelia marilandica (Woodland pinkroot) protein is Ribulose bisphosphate carboxylase large chain (rbcL).